The sequence spans 544 residues: Membrane protein insertase YidC (544 aa).

The next 5 membrane-spanning stretches (helical) occupy residues leucine 15 to phenylalanine 35, leucine 321 to proline 341, tryptophan 343 to phenylalanine 363, leucine 409 to valine 429, and methionine 506 to isoleucine 526.

It belongs to the OXA1/ALB3/YidC family. Type 1 subfamily. Interacts with the Sec translocase complex via SecD. Specifically interacts with transmembrane segments of nascent integral membrane proteins during membrane integration.

It localises to the cell inner membrane. Its function is as follows. Required for the insertion and/or proper folding and/or complex formation of integral membrane proteins into the membrane. Involved in integration of membrane proteins that insert both dependently and independently of the Sec translocase complex, as well as at least some lipoproteins. Aids folding of multispanning membrane proteins. In Borrelia garinii subsp. bavariensis (strain ATCC BAA-2496 / DSM 23469 / PBi) (Borreliella bavariensis), this protein is Membrane protein insertase YidC.